We begin with the raw amino-acid sequence, 539 residues long: Chaperonin GroEL 1 (539 aa).

ATP contacts are provided by residues 30–33 (TLGP), lysine 51, 87–91 (DGTTT), glycine 415, 480–482 (NAA), and aspartate 496.

Belongs to the chaperonin (HSP60) family. As to quaternary structure, forms a cylinder of 14 subunits composed of two heptameric rings stacked back-to-back. Interacts with the co-chaperonin GroES.

It is found in the cytoplasm. It carries out the reaction ATP + H2O + a folded polypeptide = ADP + phosphate + an unfolded polypeptide.. Together with its co-chaperonin GroES, plays an essential role in assisting protein folding. The GroEL-GroES system forms a nano-cage that allows encapsulation of the non-native substrate proteins and provides a physical environment optimized to promote and accelerate protein folding. In Bradyrhizobium sp. (strain ORS 278), this protein is Chaperonin GroEL 1.